The following is a 1703-amino-acid chain: Arf-GAP with Rho-GAP domain, ANK repeat and PH domain-containing protein 2 (1703 aa).

The region spanning 6-70 (EVNADIRDFL…LKQLQMIFSK (65 aa)) is the SAM domain. At Y77 the chain carries Phosphotyrosine. Disordered regions lie at residues 84–132 (KNGS…LSEG), 191–232 (EEHT…NGTN), and 286–319 (PVPEIPGSTKSIPGSYFRDRRSNTTSAGKSLTLK). Composition is skewed to polar residues over residues 85–103 (NGSTTKEQQHSDPSSSTHT), 123–132 (MVTTSTLSEG), and 197–214 (GNLTSEDSSKALSTNTEC). Residues 222–232 (TSGTHSGNGTN) show a composition bias toward low complexity. Over residues 308–319 (NTTSAGKSLTLK) the composition is skewed to polar residues. 2 PH domains span residues 480–572 (AKEK…SALK) and 585–677 (APEK…QSIA). The Arf-GAP domain maps to 674-809 (QSIAETLSDY…TLLASLTKEE (136 aa)). The C4-type zinc-finger motif lies at 698–721 (CADCKAPDPDWASINLCVVICKKC). PH domains follow at residues 899-1001 (QTAA…KRFV) and 1012-1110 (DYDL…KAAG). Residues 1114–1295 (NALQDQQLCK…DLINNYVEIF (182 aa)) enclose the Rho-GAP domain. One can recognise a Ras-associating domain in the interval 1324–1418 (GDLLIEVFVE…AYLVVKRFLT (95 aa)). The 104-residue stretch at 1428–1531 (KSIKEGILKL…WMASIFIAQH (104 aa)) folds into the PH 5 domain. Position 1627 is a phosphoserine (S1627). Disordered stretches follow at residues 1633 to 1670 (DTEAEGPHGLPKAYKGPKTLKKTEERNSKATLDADPKL) and 1684 to 1703 (RSRPLHKELPDEQTLQKEVK). Basic and acidic residues-rich tracts occupy residues 1653 to 1670 (KKTEERNSKATLDADPKL) and 1688 to 1703 (LHKELPDEQTLQKEVK).

The protein resides in the cytoplasm. Functionally, phosphatidylinositol 3,4,5-trisphosphate-dependent GTPase-activating protein that modulates actin cytoskeleton remodeling by regulating ARF and RHO family members. Is activated by phosphatidylinositol 3,4,5-trisphosphate (PtdIns(3,4,5)P3) binding. Can be activated by phosphatidylinositol 3,4-bisphosphate (PtdIns(3,4,5)P2) binding, albeit with lower efficiency. In Mus musculus (Mouse), this protein is Arf-GAP with Rho-GAP domain, ANK repeat and PH domain-containing protein 2 (Arap2).